The primary structure comprises 204 residues: Elongation factor Ts (204 aa).

The segment at 80-83 (TDFV) is involved in Mg(2+) ion dislocation from EF-Tu.

This sequence belongs to the EF-Ts family.

The protein localises to the cytoplasm. Functionally, associates with the EF-Tu.GDP complex and induces the exchange of GDP to GTP. It remains bound to the aminoacyl-tRNA.EF-Tu.GTP complex up to the GTP hydrolysis stage on the ribosome. The polypeptide is Elongation factor Ts (Thermoanaerobacter sp. (strain X514)).